A 424-amino-acid chain; its full sequence is Inositol phosphosphingolipids phospholipase C (424 aa).

Glu-49 is a Mg(2+) binding site. His-289 serves as the catalytic Proton acceptor. Helical transmembrane passes span 335-357 (LRIAHLLISIPLIIGVHVAIAWC) and 364-386 (VIILFFTVMLTIAAVVNGFCIGL).

Belongs to the neutral sphingomyelinase family. It depends on Mg(2+) as a cofactor.

It localises to the cell membrane. The protein resides in the endoplasmic reticulum membrane. Its pathway is lipid metabolism; sphingolipid metabolism. In terms of biological role, inositol phosphosphingolipids phospholipase essential for the coordination of cell wall formation. Responsible for the hydrolysis of the phosphosphingolipids (IPS), inositol phosphorylceramide (IPC), mannosylinositol phosphorylceramide (MIPC), and mannosyldiinositol phosphorylceramide (M(IP)2C). The protein is Inositol phosphosphingolipids phospholipase C (css1) of Schizosaccharomyces pombe (strain 972 / ATCC 24843) (Fission yeast).